The sequence spans 37 residues: Large ribosomal subunit protein bL36c (37 aa).

It belongs to the bacterial ribosomal protein bL36 family.

It is found in the plastid. It localises to the chloroplast. In Pleurastrum terricola (Filamentous green alga), this protein is Large ribosomal subunit protein bL36c.